The primary structure comprises 306 residues: Ciliary microtubule inner protein 2B (306 aa).

The disordered stretch occupies residues 61-92; the sequence is QSNPFPPPRDHSFDGGSQELGGRRQHPGDPNL.

The protein belongs to the CIMIP2 family. In terms of tissue distribution, expressed in airway epithelial cells.

It is found in the cytoplasm. The protein resides in the cytoskeleton. Its subcellular location is the cilium axoneme. Microtubule inner protein (MIP) part of the dynein-decorated doublet microtubules (DMTs) in cilia axoneme, which is required for motile cilia beating. This Xenopus tropicalis (Western clawed frog) protein is Ciliary microtubule inner protein 2B (cimip2b).